Reading from the N-terminus, the 510-residue chain is Bifunctional purine biosynthesis protein PurH (510 aa).

The region spanning 1-142 (MRALLSVSDK…KNYKDVMVLC (142 aa)) is the MGS-like domain.

Belongs to the PurH family.

It carries out the reaction (6R)-10-formyltetrahydrofolate + 5-amino-1-(5-phospho-beta-D-ribosyl)imidazole-4-carboxamide = 5-formamido-1-(5-phospho-D-ribosyl)imidazole-4-carboxamide + (6S)-5,6,7,8-tetrahydrofolate. The catalysed reaction is IMP + H2O = 5-formamido-1-(5-phospho-D-ribosyl)imidazole-4-carboxamide. The protein operates within purine metabolism; IMP biosynthesis via de novo pathway; 5-formamido-1-(5-phospho-D-ribosyl)imidazole-4-carboxamide from 5-amino-1-(5-phospho-D-ribosyl)imidazole-4-carboxamide (10-formyl THF route): step 1/1. Its pathway is purine metabolism; IMP biosynthesis via de novo pathway; IMP from 5-formamido-1-(5-phospho-D-ribosyl)imidazole-4-carboxamide: step 1/1. This is Bifunctional purine biosynthesis protein PurH from Campylobacter jejuni (strain RM1221).